A 223-amino-acid polypeptide reads, in one-letter code: Ribonuclease HII (223 aa).

The RNase H type-2 domain maps to 1-219 (MMIAGIDEAG…VENIREELEK (219 aa)). 3 residues coordinate a divalent metal cation: Asp7, Glu8, and Asp105.

The protein belongs to the RNase HII family. The cofactor is Mn(2+). It depends on Mg(2+) as a cofactor.

It is found in the cytoplasm. The catalysed reaction is Endonucleolytic cleavage to 5'-phosphomonoester.. Its function is as follows. Endonuclease that specifically degrades the RNA of RNA-DNA hybrids. The polypeptide is Ribonuclease HII (Methanosarcina acetivorans (strain ATCC 35395 / DSM 2834 / JCM 12185 / C2A)).